Reading from the N-terminus, the 438-residue chain is sn-glycerol-3-phosphate-binding periplasmic protein UgpB (438 aa).

An N-terminal signal peptide occupies residues 1-23 (MISLRHTALGLALSLAFTGQALA). The sn-glycerol 3-phosphate site is built by Y65, E89, S144, S270, G307, Y346, and R397.

It belongs to the bacterial solute-binding protein 1 family. The complex is composed of two ATP-binding proteins (UgpC), two transmembrane proteins (UgpA and UgpE) and a solute-binding protein (UgpB).

It localises to the periplasm. In terms of biological role, part of the ABC transporter complex UgpBAEC involved in sn-glycerol-3-phosphate (G3P) import. Binds G3P. This Salmonella typhi protein is sn-glycerol-3-phosphate-binding periplasmic protein UgpB (ugpB).